Here is a 414-residue protein sequence, read N- to C-terminus: uncharacterized protein (414 aa).

The tract at residues 87-117 (KTNDDNKTNGRETHLRPSPSKPEYTGRPTQN) is disordered. Residues 88–101 (TNDDNKTNGRETHL) show a composition bias toward basic and acidic residues. Residues 243-405 (SMLQSSIDKL…RNKLEMEVER (163 aa)) are a coiled coil.

This is an uncharacterized protein from Encephalitozoon cuniculi (strain GB-M1) (Microsporidian parasite).